Reading from the N-terminus, the 904-residue chain is Protein translocase subunit SecA (904 aa).

Residues glutamine 87, 105 to 109 (GEGKT), and aspartate 512 contribute to the ATP site. The tract at residues 851-870 (LARQQQLSHQTDNSALMSEE) is disordered. Residues cysteine 888, cysteine 890, cysteine 899, and histidine 900 each coordinate Zn(2+).

It belongs to the SecA family. In terms of assembly, monomer and homodimer. Part of the essential Sec protein translocation apparatus which comprises SecA, SecYEG and auxiliary proteins SecDF-YajC and YidC. Zn(2+) serves as cofactor.

It is found in the cell inner membrane. It localises to the cytoplasm. The catalysed reaction is ATP + H2O + cellular proteinSide 1 = ADP + phosphate + cellular proteinSide 2.. Part of the Sec protein translocase complex. Interacts with the SecYEG preprotein conducting channel. Has a central role in coupling the hydrolysis of ATP to the transfer of proteins into and across the cell membrane, serving both as a receptor for the preprotein-SecB complex and as an ATP-driven molecular motor driving the stepwise translocation of polypeptide chains across the membrane. The protein is Protein translocase subunit SecA of Yersinia pseudotuberculosis serotype O:1b (strain IP 31758).